A 226-amino-acid polypeptide reads, in one-letter code: Fibrillarin-like rRNA/tRNA 2'-O-methyltransferase (226 aa).

S-adenosyl-L-methionine contacts are provided by residues 85 to 86 (TT), 104 to 105 (EF), 129 to 130 (DA), and 149 to 152 (DVAQ).

Belongs to the methyltransferase superfamily. Fibrillarin family. Interacts with nop5. Component of box C/D small ribonucleoprotein (sRNP) particles that contain rpl7ae, FlpA and nop5, plus a guide RNA.

Involved in pre-rRNA and tRNA processing. Utilizes the methyl donor S-adenosyl-L-methionine to catalyze the site-specific 2'-hydroxyl methylation of ribose moieties in rRNA and tRNA. Site specificity is provided by a guide RNA that base pairs with the substrate. Methylation occurs at a characteristic distance from the sequence involved in base pairing with the guide RNA. The chain is Fibrillarin-like rRNA/tRNA 2'-O-methyltransferase from Thermococcus gammatolerans (strain DSM 15229 / JCM 11827 / EJ3).